A 468-amino-acid polypeptide reads, in one-letter code: uncharacterized protein (468 aa).

The TRAM domain maps to 3–61 (TFANGMTLDVTVDALAPGGKAVCRHEGRVIFVDRGLPGQQLHVRLTTVRKRFAEAECLA). Cysteine 74, cysteine 80, cysteine 83, and cysteine 162 together coordinate [4Fe-4S] cluster. The S-adenosyl-L-methionine site is built by glutamine 288, tyrosine 317, glutamate 338, and aspartate 389. Cysteine 416 acts as the Nucleophile in catalysis.

Belongs to the class I-like SAM-binding methyltransferase superfamily. RNA M5U methyltransferase family.

This is an uncharacterized protein from Nitratidesulfovibrio vulgaris (strain ATCC 29579 / DSM 644 / CCUG 34227 / NCIMB 8303 / VKM B-1760 / Hildenborough) (Desulfovibrio vulgaris).